Consider the following 283-residue polypeptide: NAD kinase (283 aa).

The Proton acceptor role is filled by Asp66. NAD(+) contacts are provided by residues 66-67 (DG), 137-138 (ND), Arg165, Asp167, and 178-183 (TGYSLS).

This sequence belongs to the NAD kinase family. A divalent metal cation serves as cofactor.

It localises to the cytoplasm. The enzyme catalyses NAD(+) + ATP = ADP + NADP(+) + H(+). Involved in the regulation of the intracellular balance of NAD and NADP, and is a key enzyme in the biosynthesis of NADP. Catalyzes specifically the phosphorylation on 2'-hydroxyl of the adenosine moiety of NAD to yield NADP. The chain is NAD kinase from Chloroherpeton thalassium (strain ATCC 35110 / GB-78).